Here is a 498-residue protein sequence, read N- to C-terminus: MRINPTTSSPVVSTLEEKNLGRIAQIIGPVLDVVFPPGKMPNIYNALVVKGRDTVGQQINVTCEVQQLLGNNRVRAVAMSATDGLMRGMEVIDTGAPLSVPVGGATLGRIFNVLGEPVDNLGPVDTRTTSPIHRSAPAFIQLDTKLSIFETGIKVVDLLAPYRRGGKIGLFGGAGVGKTVLIMELINNIAKAHGGVSVFGGVGERTREGNDLYMEMKESGVINEKNIAESKVALVYGQMNEPPGARMRVGLTALTMAEYFRDVNEQDVLLFIDNIFRFVQAGSEVSALLGRMPSAVGYQPTLSTEMGSLQERITSTKEGSITSIQAVYVPADDLTDPAPATTFSHLDATTVLSRVLAAKGIYPAVDPLDSTSTMLQPRIVGEEHYETAQRVKQTSQRYKELQDIIAILGLDELSEEDRLTVARARKIERFLSQPFFVAEVFTGSPGKYVGLGETIRGFQLILSGELDGLPEQAFYLVGNIDEATAKAMNLEVESKLKK.

ATP is bound at residue 172-179 (GGAGVGKT).

Belongs to the ATPase alpha/beta chains family. In terms of assembly, F-type ATPases have 2 components, CF(1) - the catalytic core - and CF(0) - the membrane proton channel. CF(1) has five subunits: alpha(3), beta(3), gamma(1), delta(1), epsilon(1). CF(0) has four main subunits: a(1), b(1), b'(1) and c(9-12).

It localises to the plastid. The protein localises to the chloroplast thylakoid membrane. The catalysed reaction is ATP + H2O + 4 H(+)(in) = ADP + phosphate + 5 H(+)(out). Produces ATP from ADP in the presence of a proton gradient across the membrane. The catalytic sites are hosted primarily by the beta subunits. The protein is ATP synthase subunit beta, chloroplastic of Licuala grandis (Ruffled fan palm).